Here is a 1481-residue protein sequence, read N- to C-terminus: Cystic fibrosis transmembrane conductance regulator (1481 aa).

Over 1-77 the chain is Cytoplasmic; it reads MQKSPLEKAG…KLINALRRCF (77 aa). The chain crosses the membrane as a helical span at residues 78–98; it reads FWRFMFYGILLYLGEVTKAVQ. Positions 81–365 constitute an ABC transmembrane type-1 1 domain; the sequence is FMFYGILLYL…WAVQTWYDSL (285 aa). Residues 99–122 lie on the Extracellular side of the membrane; that stretch reads PLLLGRIIASYDPDNKVERSIAIY. The helical transmembrane segment at 123 to 146 threads the bilayer; the sequence is LGIGLCLLFVVRTLLLHPAIFGLH. At 147 to 195 the chain is on the cytoplasmic side; it reads HIGMQMRIAMFSLIYKKTLKLSSRVLDKISIGQLISLLSNNLNKFDEGL. Residues 196-216 traverse the membrane as a helical segment; it reads ALAHFVWISPLQVTLLMGLLW. Residues 217 to 222 are Extracellular-facing; the sequence is ELLQAS. Residues 223 to 243 traverse the membrane as a helical segment; sequence AFCGLAFLIVLALVQAGLGRM. At 244 to 298 the chain is on the cytoplasmic side; it reads MMKYRDQRAGKINERLVITSEMIENIQSVKAYCWEEAMEKMIENLRQTELKLTRK. Residues 299–319 traverse the membrane as a helical segment; sequence AAYVRYFNSSAFFFSGFFVVF. The Extracellular portion of the chain corresponds to 320–339; the sequence is LSVLPYALTKGIILRKIFTT. Residues 340 to 358 traverse the membrane as a helical segment; sequence ISFCIVLRMAVTRQFPWAV. Residues 359-858 are Cytoplasmic-facing; the sequence is QTWYDSLGAI…YLRYITVHRS (500 aa). Residues W401, S434, 458 to 465, and Q493 contribute to the ATP site; that span reads GSTGAGKT. Positions 423–646 constitute an ABC transporter 1 domain; that stretch reads NGDNNLFFSN…RPDFSSKLMG (224 aa). Residue C524 is the site of S-palmitoyl cysteine attachment. Residues S549 and S660 each carry the phosphoserine modification. The tract at residues 654–831 is disordered R region; that stretch reads SAERRNSILT…EEINEEDLKE (178 aa). The residue at position 670 (S670) is a Phosphoserine; by PKA. A Phosphoserine modification is found at S686. Residue K688 forms a Glycyl lysine isopeptide (Lys-Gly) (interchain with G-Cter in ubiquitin) linkage. Phosphoserine is present on residues S700 and S712. Phosphothreonine is present on T717. S737, S768, S790, S795, and S813 each carry phosphoserine. Residues 859-879 form a helical membrane-spanning segment; the sequence is LIFVLIWCIVIFLAEVAASLV. The ABC transmembrane type-1 2 domain occupies 859-1155; sequence LIFVLIWCIV…AVNSSIDVDS (297 aa). Residues 880–918 lie on the Extracellular side of the membrane; the sequence is VLWLFGNTAPQDKENSTKSGNSSYAVIITNTSSYYFFYI. 3 N-linked (GlcNAc...) asparagine glycosylation sites follow: N894, N900, and N909. Residues 919–939 traverse the membrane as a discontinuously helical segment; sequence YVGVADTLLALGLFRGLPLVH. Topologically, residues 940–990 are cytoplasmic; the sequence is TLITVSKILHHKMLHSVLQAPMSTLNTLKAGGILNRFSKDIAILDDLLPLT. A helical membrane pass occupies residues 991–1011; that stretch reads IFDFIQLLLIVVGAIAVVSVL. Topologically, residues 1012–1013 are extracellular; the sequence is QP. A helical transmembrane segment spans residues 1014 to 1034; sequence YIFLATVPVIAAFILLRAYFL. The Cytoplasmic portion of the chain corresponds to 1035 to 1095; the sequence is HTSQQLKQLE…TANWFLYLST (61 aa). Residues 1096 to 1116 traverse the membrane as a helical segment; that stretch reads LRWFQMRIEMIFVLFFIAVAF. At 1117-1130 the chain is on the extracellular side; it reads ISILTTGEGEGRVG. A helical membrane pass occupies residues 1131–1151; the sequence is IILTLAMNIMSTLQWAVNSSI. The Cytoplasmic portion of the chain corresponds to 1152–1481; the sequence is DVDSLMRSVS…AEEEVQGTRL (330 aa). One can recognise an ABC transporter 2 domain in the interval 1199 to 1444; the sequence is VKKDDVWPSG…KSLFRQAISS (246 aa). ATP contacts are provided by residues Y1220 and 1245–1252; that span reads GRTGSGKS. The interaction with GORASP2 stretch occupies residues 1387 to 1481; that stretch reads RTLKQAFADC…AEEEVQGTRL (95 aa). C1396 is lipidated: S-palmitoyl cysteine. A phosphoserine mark is found at S1445 and S1457. Positions 1449–1481 are disordered; the sequence is KLFPHRNSSKHKSRPQITALKEEAEEEVQGTRL. A compositionally biased stretch (basic residues) spans 1450-1462; that stretch reads LFPHRNSSKHKSR. A compositionally biased stretch (acidic residues) spans 1471 to 1481; it reads EAEEEVQGTRL. A PDZ-binding motif is present at residues 1479-1481; that stretch reads TRL.

The protein belongs to the ABC transporter superfamily. ABCC family. CFTR transporter (TC 3.A.1.202) subfamily. In terms of assembly, monomer; does not require oligomerization for channel activity. May form oligomers in the membrane. Interacts with SLC26A3, SLC26A6 and NHERF1. Interacts with SHANK2. Interacts with MYO6. Interacts (via C-terminus) with GOPC (via PDZ domain); this promotes CFTR internalization and thereby decreases channel activity. Interacts with SLC4A7 through NHERF1. Found in a complex with MYO5B and RAB11A. Interacts with ANO1. Interacts with SLC26A8. Interacts with AHCYL1; the interaction increases CFTR activity. Interacts with CSE1L. The core-glycosylated form interacts with GORASP2 (via PDZ GRASP-type 1 domain) in respone to ER stress. Interacts with MARCHF2; the interaction leads to CFTR ubiqtuitination and degradation. Interacts with ADGRG2. In terms of processing, N-glycosylated. Phosphorylated; cAMP treatment promotes phosphorylation and activates the channel. Dephosphorylation decreases the ATPase activity (in vitro). Phosphorylation at PKA sites activates the channel. Phosphorylation at PKC sites enhances the response to phosphorylation by PKA. Phosphorylated by AMPK; this inhibits channel activity. Post-translationally, ubiquitinated, leading to its degradation in the lysosome. Deubiquitination by USP10 in early endosomes enhances its endocytic recycling to the cell membrane. Ubiquitinated by RNF185 during ER stress. Ubiquitinated by MARCHF2. As to expression, isoform 1 is expressed in the pancreas. Isoform 2 is specifically expressed in the ventricle.

The protein resides in the apical cell membrane. The protein localises to the early endosome membrane. Its subcellular location is the cell membrane. It localises to the recycling endosome membrane. It is found in the endoplasmic reticulum membrane. The protein resides in the nucleus. It catalyses the reaction ATP + H2O + closed Cl(-) channel = ADP + phosphate + open Cl(-) channel.. It carries out the reaction chloride(in) = chloride(out). The catalysed reaction is hydrogencarbonate(in) = hydrogencarbonate(out). The enzyme catalyses ATP + H2O = ADP + phosphate + H(+). In terms of biological role, epithelial ion channel that plays an important role in the regulation of epithelial ion and water transport and fluid homeostasis. Mediates the transport of chloride ions across the cell membrane. Possesses an intrinsic ATPase activity and utilizes ATP to gate its channel; the passive flow of anions through the channel is gated by cycles of ATP binding and hydrolysis by the ATP-binding domains. The ion channel is also permeable to HCO(3)(-); selectivity depends on the extracellular chloride concentration. Exerts its function also by modulating the activity of other ion channels and transporters. Contributes to the regulation of the pH and the ion content of the epithelial fluid layer. Modulates the activity of the epithelial sodium channel (ENaC) complex, in part by regulating the cell surface expression of the ENaC complex. May regulate bicarbonate secretion and salvage in epithelial cells by regulating the transporter SLC4A7. Can inhibit the chloride channel activity of ANO1. Plays a role in the chloride and bicarbonate homeostasis during sperm epididymal maturation and capacitation. This chain is Cystic fibrosis transmembrane conductance regulator, found in Oryctolagus cuniculus (Rabbit).